A 640-amino-acid polypeptide reads, in one-letter code: Probable potassium transport system protein Kup 1 (640 aa).

The next 12 membrane-spanning stretches (helical) occupy residues 25 to 45 (LVLAALGVVYGDLGTSPLYAL), 65 to 85 (VVSLFLWSLILMVSVKYVMVL), 115 to 135 (AVGWVLLGLAGAAMLYGDGVI), 153 to 173 (PALAAYVVPATVVILAMLFMI), 181 to 201 (VGAAFGPILAAWFVAIAALGL), 227 to 247 (GFAGFVSLGAVVLCLTGAEAL), 263 to 283 (WYGLALPALILSYLGQGALLL), 305 to 325 (MVALSTLATIVASQALITAVF), 353 to 373 (IYLPLLNWTLMLATIAVVLGF), 381 to 401 (AAFGLAVSTTMAITTVLFAVL), 410 to 430 (WWAVALVAGSLFAIDLAFWLA), and 438 to 458 (GGWLPLLLGLAVFCVMGCWFG).

It belongs to the HAK/KUP transporter (TC 2.A.72) family.

Its subcellular location is the cell inner membrane. It carries out the reaction K(+)(in) + H(+)(in) = K(+)(out) + H(+)(out). Functionally, transport of potassium into the cell. Likely operates as a K(+):H(+) symporter. This Chromobacterium violaceum (strain ATCC 12472 / DSM 30191 / JCM 1249 / CCUG 213 / NBRC 12614 / NCIMB 9131 / NCTC 9757 / MK) protein is Probable potassium transport system protein Kup 1.